The primary structure comprises 389 residues: tRNA-specific 2-thiouridylase MnmA (389 aa).

Residues 21–28 and leucine 47 each bind ATP; that span reads AMSGGVDS. Cysteine 115 functions as the Nucleophile in the catalytic mechanism. Cysteine 115 and cysteine 212 are joined by a disulfide. Glycine 139 contributes to the ATP binding site. Residues 162–164 are interaction with tRNA; it reads RDQ. Cysteine 212 (cysteine persulfide intermediate) is an active-site residue.

Belongs to the MnmA/TRMU family.

It is found in the cytoplasm. The enzyme catalyses S-sulfanyl-L-cysteinyl-[protein] + uridine(34) in tRNA + AH2 + ATP = 2-thiouridine(34) in tRNA + L-cysteinyl-[protein] + A + AMP + diphosphate + H(+). Functionally, catalyzes the 2-thiolation of uridine at the wobble position (U34) of tRNA, leading to the formation of s(2)U34. In Xanthobacter autotrophicus (strain ATCC BAA-1158 / Py2), this protein is tRNA-specific 2-thiouridylase MnmA.